A 1066-amino-acid chain; its full sequence is Beta-galactosidase (1066 aa).

Substrate is bound by residues Asn-110 and Asp-209. Position 209 (Asp-209) interacts with Na(+). The Mg(2+) site is built by Glu-432, His-434, and Glu-477. Substrate contacts are provided by residues Glu-477 and Glu-553 to His-556. Glu-477 functions as the Proton donor in the catalytic mechanism. The active-site Nucleophile is the Glu-553. Asn-613 serves as a coordination point for Mg(2+). Na(+) contacts are provided by Phe-617 and Asn-620. Residues Asn-620 and Trp-1041 each contribute to the substrate site.

Belongs to the glycosyl hydrolase 2 family. Homotetramer. It depends on Mg(2+) as a cofactor. Requires Na(+) as cofactor.

It catalyses the reaction Hydrolysis of terminal non-reducing beta-D-galactose residues in beta-D-galactosides.. This chain is Beta-galactosidase, found in Yersinia pseudotuberculosis serotype IB (strain PB1/+).